The sequence spans 7094 residues: MSKINKYGLELHWAPEFPWMFEDAEEKLDNPSSSEVDIVCSTTAQKLETGGICPENHVMVDCRRLLKQECCVQSSLIREIVMNTRPYDLEVLLQDALQSREAVLVTPPLGMSLEACYVRGCNPNGWTMGLFRRRSVCNTGRCAVNKHVAYQLYMIDPAGVCFGAGQFVGWVIPLAFMPVQSRKFIVPWVMYLRKCGEKGAYNKDHKRGGFEHVYNFKVEDAYDLVHDEPKGKFSKKAYALIRGYRGVKPLLYVDQYGCDYTGGLADGLEAYADKTLQEMKALFPIWSQELPFDVTVAWHVVRDPRYVMRLQSASTIRSVAYVANPTEDLCDGSVVIKEPVHVYADDSIILRQHNLVDIMSCFYMEADAVVNAFYGVDLKDCGFVMQFGYIDCEQDLCDFKGWVPGNMIDGFACTTCGHVYETGDLLAQSSGVLPVNPVLHTKSAAGYGGFGCKDSFTLYGQTVVYFGGCVYWSPARNIWIPILKSSVKSYDGLVYTGVVGCKAIVKETNLICKALYLDYVQHKCGNLHQRELLGVSDVWHKQLLLNRGVYKPLLENIDYFNMRRAKFSLETFTVCADGFMPFLLDDLVPRAYYLAVSGQAFCDYAGKICHAVVSKSKELLDVSLDSLGAAIHYLNSKIVDLAQHFSDFGTSFVSKIVHFFKTFTTSTALAFAWVLFHVLHGAYIVVESDIYFVKNIPRYASAVAQAFRSVAKVVLDSLRVTFIDGLSCFKIGRRRICLSGSKIYEVERGLLHSSQLPLDVYDLTMPSQVQKTKQKPIYLKGSGSDFSLADSVVEVVTTSLTPCGYSEPPKVADKICIVDNVYMAKAGDKYYPVVVDGHVGLLDQAWRVPCAGRCVTFKEQPTVNEIASTPKTIKVFYELDKDFNTILNTACGVFEVDDTVDMEEFYAVVIDAIEEKLSPCKELEGVGAKVSAFLQKLEDNSLFLFDEAGEEVLAPKLYCAFTAPEDDDFLEESGVEEDDVEGEETDLTVTSAGEPCVASEQEESSEILEDTLDDGPCVETSDSQVEEDVQMSDFVDLESVIQDYENVCFEFYTTEPEFVKVLDLYVPKATRNNCWLRSVLAVMQKLPCQFKDKNLQDLWVLYKQQYSQLFVDTLVNKIPANIVVPQGGYVADFAYWFLTLCDWQCVAYWKCIKCDLALKLKGLDAMFFYGDVVSHVCKCGESMVLIDVDVPFTAHFALKDKLFCAFITKRSVYKAACVVDVNDSHSMAVVDGKQIDDHRITSITSDKFDFIIGHGMSFSMTTFEIAQLYGSCITPNVCFVKGDIIKVSKRVKAEVVVNPANGHMAHGGGVAKAIAVAAGQQFVKETTDMVKSKGVCATGDCYVSTGGKLCKTVLNVVGPDARTQGKQSYALLERVYKHLNKYDCVVTTLISAGIFSVPSDVSLTYLLGTAKKQVVLVSNNQEDFDLISKCQITAVEGTKKLAERLSFNVGRSIVYETDANKLILSNDVAFVSTFNVLQDVLSLRHDIALDDDARTFVQSNVDVVPEGWRVVNKFYQINGVRTVKYFECPGGIDICSQDKVFGYVQQGSFNKATVAQIKALFLDKVDILLTVDGVNFTNRFVPVGESFGKSLGNVFCDGVNVTKHKCDINYKGKVFFQFDNLSSEDLKAVRSSFNFDQKELLAYYNMLVNCSKWQVVFNGKYFTFKQANNNCFVNVSCLMLQSLNLKFKIVQWQEAWLEFRSGRPARFVSLVLAKGGFKFGDPADSRDFLRVVFSQVDLTGAICDFEIACKCGVKQEQRTGVDAVMHFGTLSREDLEIGYTVDCSCGKKLIHCVRFDVPFLICSNTPASVKLPKGVGSANIFKGDKVGHYVHVKCEQSYQLYDASNVKKVTDVTGNLSDCLYLKNLKQTFKSVLTTYYLDDVKKIEYKPDLSQYYCDGGKYYTQRIIKAQFKTFEKVDGVYTNFKLIGHTVCDILNAKLGFDSSKEFVEYKVTEWPTATGDVVLATDDLYVKRYERGCITFGKPVIWLSHEQASLNSLTYFNRPLLVDENKFDVLKVDDVDDGGDISESDAKEPKEINIIKLSGVKKPFKVEDSVIVNDDTSEIKYVKSLSIVDVYDMWLTGCRCVVRTANALSRAVNVPTIRKFIKFGMTLVSIPIDLLNLREIKPVFNVVKAVRNKISACFNFIKWLFVLLFGWIKISADNKVIYTTEVASKLTCKLVALAFKNAFLTFKWSVVARGACIIATIFLLWFNFIYANVIFSDFYLPKIGFLPTFVGKIAQWIKNTFSLVTICDLYSIQDVGFKNQYCNGSIACQFCLAGFDMLDNYKAIDVVQYEADRRAFVDYTGVLKIVIELIVSYALYTAWFYPLFALISIQILTTWLPELFMLSTLHWSVRLLVSLANMLPAHVFMRFYIIIASFIKLFSLFRHVAYGCSKSGCLFCYKRNRSLRVKCSTIVGGMIRYYDAMANGGTGFCSKHQWNCIDCDSYKPGNTFITVEAALDLSKELKRPIQPTDVAYHTVTDVKQVGCYMRLFYDRDGQRTYDDVNASLFVDYSNLLHSKVKSVPNMHVVVVENDADKANFLNAAVFYAQSLFRPILMVDKNLITTANTGTSVTETMFDVYVDTFLSMFDVDKKSLNALIATAHSSIKQGTQICKVLDTFLSCARKSCSIDSDVDTKCLADSVMSAVSAGLELTDESCNNLVPTYLKGDNIVAADLGVLIQNSAKHVQGNVAKIAGVSCIWSVDAFNQLSSDFQHKLKKACCKTGLKLKLTYNKQMANVSVLTTPFSLKGGAVFSYFVYVCFVLSLVCFIGLWCLMPTYTVHKSDFQLPVYASYKVLDNGVIRDVSVEDVCFANKFEQFDQWYESTFGLSYYSNSMACPIVVAVVDQDFGSTVFNVPTKVLRYGYHVLHFITHALSADGVQCYTPHSQISYSNFYASGCVLSSACTMFAMADGSPQPYCYTDGLMQNASLYSSLVPHVRYNLANAKGFIRFPEVLREGLVRIVRTRSMPYCRVGLCEEADEGICFNFNGSWVLNNDYYRSLPGTFCGRDVFDLIYQLFKGLAQPVDFLALTASSIAGAILAVIVVLVFYYLIKLKRAFGDYTSIVFVNVIVWCVNFMMLFVFQVYPTLSCVYAICYFYATLYFPSEISVIMHLQWLVMYGTIMPLWFCLLYISVVVSNHAFWVFSYCRQLGTSVRSDGTFEEMALTTFMITKDSYCKLKNSLSDVAFNRYLSLYNKYRYYSGKMDTAAYREAACSQLAKAMDTFTNNNGSDVLYQPPTASVSTSFLQSGIVKMVNPTSKVEPCIVSVTYGNMTLNGLWLGDKVYCPRHVICSASDMTNPDYTNLLCRVTSSDFTVLFDRLSLTVMSYQMQGCMLVLTVTLQNSRTPKYTFGVVKPGETFTVLAAYNGKPQGAFHVTMRSSYTIKGSFLCGSCGSVVYVIMGDCVKFVYMHQLELSTGCHTGTDFNGDFYGPYKDAQVVQLPVQDYIQSVNFVAWLYAAILNNCNWFVQSDKCSVEDFNVWALSNGFSQVKSDLVIDALASMTGVSLETLLAAIKHLKNGFQGRQIMGSCSFEDELTPSDVYQQLAGIKLQSKRTRLVKGIVCWIMASTFLFSCIITAFVKWTMFMYVTTNMLSITFCALCVISLTMLLVKHKHLYLTMYIIPVLFTLLYNNYLVVYKQTFRGYVYAWLSYYVPSVEYTYTDEVIYGMLLLIGMVFVTLRSINQYLFSFIMFVGRVISVVSLWYMGSNLEEEILLMLASLFGTYTWTTALSMAAAKVIAKWVAVNVLYFTDIPQIKIVLVCYLFIGYIISCYWGLFSLMNSLFRMPLGVYNYKISVQELRYMNANGLRPPKNSFEALMLNFKLLGIGGVPIIEVSQFQSKLTDVKCANVVLLNCLQHLHVASNSKLWQYCSTLHNEILATSDLGVAFEKLAQLLIVLFANPAAVDSKCLTSIEEVCDDYAKDNTVLQALQSEFVNMASFVEYEVAKKNLDEACSSGSANQQQLKQLEKACNIAKSAYERDRAVARKLERMADLALTNMYKEARINDKKSKVVSALQTMLFSMVRKLDNQALNSILDNAVKGCVPLNAIPSLAANTLTIIVPDKSVYDQVVDNVYVTYAGNVWQIQTIQDSDGTNKQLHEISDDCNWPLVIIANRHNEVSATALQNNELMPAKLKTQVVNSGPDQTCNTPTQCYYNNSYNGKIVYAILSDVDGLKYTKILKDDGNFVVLELDPPCKFTVQDVKGLKIKYLYFVKGCNTLARGWVVGTISSTVRLQAGTATEYASNSSILSLCAFSVDPKKTYLDFIQQGGTPIANCVKMLCDHAGTGMAITVKPDATTSQDSYGGASVCIYCRARVEHPDVDGLCKLRGKFVQVPVGIKDPVSYVLTHDVCQVCGFWRDGSCSCVSTDTTVQSKDTNFLNRVRGTSVDARLVPCASGLSTDVQLRAFDICNASVAGIGLHLKVNCCRFQRVDENGDKLDQFFVVKRTDLTIYNREMECYERVKDCKFVAEHDFFTFDVEGSRVPHIVRKDLTKYTMLDLCYALRHFDRNDCMLLCDILSIYAGCEQSYFTKKDWYDFVENPDIINVYKKLGPIFNRALVSATEFADKLVEVGLVGILTLDNQDLNGKWYDFGDYVIAAPGCGVAIADSYYSYMMPMLTMCHALDCELYVNNAYRLFDLVQYDFTDYKLELFNKYFKHWSMPYHPNTVDCQDDRCIIRCANFNILFSMVLPNTCFGPLVRQIFVDGVPFVVSIGYHYKELGIVMNMDVDTHRYRLSLKDLLLYAADPALHVASASALYDLRTCCFSVAAITSGVKFQTVKPGNFNQDFYDFILSKGLLKEGSSVDLKHFFFTQDGNAAITDYNYYKYNLPTMVDIKQLLFVLEVVYKYFEIYDGGCIPASQVIVNNYDKSAGYPFNKFGKARLYYEALSFEEQDEIYAYTKRNVLPTLTQMNLKYAISAKNRARTVAGVSILSTMTGRMFHQKCLKSIAATRGVPVVIGTTKFYGGWDDMLRRLIKDVDNPVLMGWDYPKCDRAMPNILRIVSSLVLARKHEACCSQSDRFYRLANEYAQVLSEIVMCGGCYYVKPGGTSSGDATTAFANSVFNICQAVSANVCALMSCNGNKIEDLSIRALQKRLYSHVYRSDMVDSTFVTEYYEFLNKHFSMMILSDDGVVCYNSDYASKGYIANISAFQQVLYYQNNVFMSESKCWVENDINNGPHEFCSQHTMLVKMDGDDVYLPYPDPSRILGAGCFVDDLLKTDSVLLIERFVSLAIDAYPLVYHENEEYQKVFRVYLEYIKKLYNELGNQILDSYSVILSTCDGQKFTDESFYKNMYLRSAVMQSVGACVVCSSQTSLRCGSCIRKPLLCCKCCYDHVMATDHKYVLSVSPYVCNAPGCDVNDVTKLYLGGMSYYCEDHKPQYSFKLVMNGMVFGLYKQSCTGSPYIDDFNRIASCKWTDVDDYILANECTERLKLFAAETQKATEEAFKQSYASATIQEIVSERELILSWEIGKVKPPLNKNYVFTGYHFTKNGKTVLGEYVFDKSELTNGVYYRATTTYKLSVGDVFVLTSHSVANLSAPTLVPQENYSSIRFASVYSVLETFQNNVVNYQHIGMKRYCTVQGPPGTGKSHLAIGLAVYYCTARVVYTAASHAAVDALCEKAYKFLNINDCTRIVPAKVRVECYDKFKINDTTRKYVFTTINALPEMVTDIVVVDEVSMLTNYELSVINARIRAKHYVYIGDPAQLPAPRVLLSKGTLEPKYFNTVTKLMCCLGPDIFLGTCYRCPKEIVDTVSALVYENKLKAKNESSSLCFKVYYKGVTTHESSSAVNMQQIYLINKFLKANPLWHKAVFISPYNSQNFAARRVLGLQTQTVDSAQGSEYDYVIYSQTAETAHSVNVNRFNVAITRAKKGILCVMSNMQLFEALQFTTLTVDKVPQAVETRVQCSTNLFKDCSKSYSGYHPAHAPSFLAVDDKYKATGDLAVCLGIGDSAVTYSRLTSLMGFKLDVTLDGYCKLFITKEEAVKRVRAWVGFDAEGAHATRDSIGTNFPLQLGFSTGIDFVVEATGLFADRDGYSFKKAVAKAPPGEQFKHLIPLMTRGQRWDVVRPRIVQMFADHLIDLSDCVVLVTWAANFELTCLRYFAKVGREISCNVCTKRATAYNSRTGYYGCWRHSVTCDYLYNPLIVDIQQWGYIGSLSSNHDLYCSVHKGAHVASSDAIMTRCLAVYDCFCNNINWNVEYPIISNELSINTSCRVLQRVMLKAAMLCNRYTLCYDIGNPKAIACVKDFDFKFYDAQPIVKSVKTLLYFFEAHKDSFKDGLCMFWNCNVDKYPPNAVVCRFDTRVLNNLNLPGCNGGSLYVNKHAFHTKPFSRAAFEHLKPMPFFYYSDTPCVYMDGMDAKQVDYVPLKSATCITRCNLVGAVCLKHAEEYREYLNSYNTATTAGFTFWVYKTFDFYNLWNTFTKLQSLENVVYNLVKTGHYTGQAGEMPCAIINDKVVAKIDKEDVVIFINNTTYPTNVAVELFAKRSIRHHPELKLFRNLNIDVCWKHVIWDYARESIFCSNTYGVCMYTDLKFIDKLNVLFDGRDNGALEAFKRSNNGVYISTTKVKSLSMIRGPPRAELNGVVVDKVGDTDCVFYFAVRKEGQDVIFSQFDSLRVSSNQSPQGNLGSNEPGNVGGNDALATSTIFTQSRVISSFTCRTDMEKDFIALDQDVFIQKYGLEDYAFEHIVYGNFNQKIIGGLHLLIGLYRRQQTSNLVIQEFVSYDSSIHSYFITDEKSGGSKSVCTVIDILLDDFVALVKSLNLNCVSKVVNVNVDFKDFQFMLWCNDEKVMTFYLRLQAASDWKPGYSMPVLYKYLNSPMERVSLWNYGKPVTLPTGCMMNVAKYTQLCQYLNTTTLAVPVNMRVLHLGAGSEKGVAPGSAVLRQWLPAGTILVDNDLYPFVSDSVATYFGDCITLPFDCQWDLIISDMYDPITKNIGEYNVSKDGFFTYICHMIRDKLALGGSVAIKITEFSWNAELYKLMGYFAFWTVFCTNANASSSEGFLIGINYLGKPKVEIDGNVMHANYLFWRNSTVWNGGAYSLFDMAKFPLKLAGTAVINLRADQINDMVYSLLEKGKLLVRDTNKEVFVGDSMVNVI.

The CoV Nsp1 globular domain occupies 54-196; the sequence is PENHVMVDCR…PWVMYLRKCG (143 aa). In terms of domain architecture, BetaCoV Nsp1 C-terminal spans 216 to 246; that stretch reads FKVEDAYDLVHDEPKGKFSKKAYALIRGYRG. The 270-residue stretch at 250 to 519 folds into the CoV Nsp2 N-terminal domain; that stretch reads LLYVDQYGCD…LICKALYLDY (270 aa). C392, C397, C413, and C416 together coordinate Zn(2+). A C4 region spans residues 392–416; that stretch reads CEQDLCDFKGWVPGNMIDGFACTTC. The CoV Nsp2 middle domain occupies 524 to 713; sequence CGNLHQRELL…AQAFRSVAKV (190 aa). The CoV Nsp2 C-terminal domain maps to 733-851; that stretch reads RRRICLSGSK…LDQAWRVPCA (119 aa). Residues 853-966 form the Ubiquitin-like 1 domain; that stretch reads RCVTFKEQPT…LYCAFTAPED (114 aa). The span at 972 to 986 shows a compositional bias: acidic residues; the sequence is ESGVEEDDVEGEETD. Residues 972 to 992 form a disordered region; it reads ESGVEEDDVEGEETDLTVTSA. The Peptidase C16 1 domain maps to 1036 to 1274; the sequence is DLESVIQDYE…IAQLYGSCIT (239 aa). C1074 serves as the catalytic For PL1-PRO activity. The Zn(2+) site is built by C1151, C1154, C1177, and C1179. Residues 1151–1179 form a C4-type 1 zinc finger; sequence CIKCDLALKLKGLDAMFFYGDVVSHVCKC. Catalysis depends on for PL1-PRO activity residues H1225 and D1236. In terms of domain architecture, Macro spans 1275–1435; it reads PNVCFVKGDI…LISKCQITAV (161 aa). A DPUP domain is found at 1491 to 1563; the sequence is DDARTFVQSN…VAQIKALFLD (73 aa). The Ubiquitin-like 2 domain maps to 1562-1617; the sequence is LDKVDILLTVDGVNFTNRFVPVGESFGKSLGNVFCDGVNVTKHKCDINYKGKVFFQ. The region spanning 1631 to 1892 is the Peptidase C16 2 domain; the sequence is SSFNFDQKEL…KIEYKPDLSQ (262 aa). Residue C1671 is the For PL2-PRO activity of the active site. 4 residues coordinate Zn(2+): C1749, C1751, C1783, and C1785. The C4-type 2 zinc-finger motif lies at 1749-1785; sequence CKCGVKQEQRTGVDAVMHFGTLSREDLEIGYTVDCSC. Residues H1828 and D1842 each act as for PL2-PRO activity in the active site. The Nucleic acid-binding domain maps to 1906–2007; sequence IKAQFKTFEK…TYFNRPLLVD (102 aa). The region spanning 2020–2169 is the G2M domain; that stretch reads DDGGDISESD…ADNKVIYTTE (150 aa). 3 helical membrane-spanning segments follow: residues 2138–2158, 2199–2219, and 2221–2241; these read ISAC…WIKI, ACII…NVIF, and DFYL…AQWI. The HD1 stretch occupies residues 2138-2385; the sequence is ISACFNFIKW…ASFIKLFSLF (248 aa). Residues 2235–2296 form the 3Ecto domain; sequence GKIAQWIKNT…AIDVVQYEAD (62 aa). Intrachain disulfides connect C2251–C2275 and C2266–C2272. 3 consecutive transmembrane segments (helical) span residues 2313–2333, 2343–2363, and 2365–2385; these read LIVS…LISI, LFML…ANML, and AHVF…FSLF. A Y1 region spans residues 2383–2473; sequence SLFRHVAYGC…ELKRPIQPTD (91 aa). In terms of domain architecture, CoV Nsp3 Y spans 2383–2750; the sequence is SLFRHVAYGC…LTTPFSLKGG (368 aa). Residues H2387, C2392, C2397, C2400, C2433, H2436, C2440, and C2443 each coordinate Zn(2+). A ZF1 region spans residues 2387-2400; sequence HVAYGCSKSGCLFC. Residues 2433-2443 form a ZF2 region; sequence CSKHQWNCIDC. The segment at 2474–2566 is Y2; the sequence is VAYHTVTDVK…MVDKNLITTA (93 aa). The segment at 2474–2750 is coV-Y; it reads VAYHTVTDVK…LTTPFSLKGG (277 aa). Positions 2567–2649 are Y3; sequence NTGTSVTETM…DSVMSAVSAG (83 aa). The segment at 2650-2750 is Y4; the sequence is LELTDESCNN…LTTPFSLKGG (101 aa). 5 helical membrane passes run 2752-2772, 3031-3051, 3063-3083, 3090-3110, and 3115-3135; these read VFSY…IGLW, ASSI…YYLI, IVFV…VFQV, VYAI…SVIM, and LVMY…SVVV. The segment at 2752–3135 is HD2; sequence VFSYFVYVCF…FCLLYISVVV (384 aa). The 98-residue stretch at 3149-3246 folds into the Nsp4C domain; that stretch reads LGTSVRSDGT…TASVSTSFLQ (98 aa). The region spanning 3247 to 3549 is the Peptidase C30 domain; that stretch reads SGIVKMVNPT…YQQLAGIKLQ (303 aa). Active-site for 3CL-PRO activity residues include H3287 and C3391. Helical transmembrane passes span 3558 to 3578, 3588 to 3608, 3615 to 3635, 3657 to 3677, 3684 to 3704, 3711 to 3731, and 3755 to 3775; these read GIVC…TAFV, TNML…MLLV, LTMY…LVVY, TYTD…FVTL, LFSF…WYMG, ILLM…LSMA, and IVLV…GLFS. Residues 3558 to 3775 are HD3; sequence GIVCWIMAST…IISCYWGLFS (218 aa). Positions 3837–3925 constitute a RdRp Nsp7 cofactor domain; that stretch reads SKLTDVKCAN…DYAKDNTVLQ (89 aa). In terms of domain architecture, RdRp Nsp8 cofactor spans 3926 to 4122; it reads ALQSEFVNMA…HNEVSATALQ (197 aa). The Nsp9 ssRNA-binding domain maps to 4123–4232; the sequence is NNELMPAKLK…GTISSTVRLQ (110 aa). An ExoN/MTase coactivator domain is found at 4233 to 4370; sequence AGTATEYASN…CVSTDTTVQS (138 aa). The Zn(2+) site is built by C4306, C4309, H4315, C4322, C4348, C4351, C4359, and C4361. Zinc fingers lie at residues 4306-4322 and 4348-4361; these read CIYC…DGLC and CQVC…SCSC. The NiRAN domain occupies 4375-4630; that stretch reads FLNRVRGTSV…DCELYVNNAY (256 aa). Mn(2+)-binding residues include N4578 and D4587. One can recognise a Nsp12 Interface domain in the interval 4631–4729; it reads RLFDLVQYDF…MNMDVDTHRY (99 aa). H4660, C4666, C4671, C4675, and C4852 together coordinate Zn(2+). The region spanning 4730 to 5297 is the Nsp12 RNA-dependent RNA polymerase domain; sequence RLSLKDLLLY…NMYLRSAVMQ (568 aa). A rdRp Fingers N-ter region spans residues 4732–4946; it reads SLKDLLLYAA…HQKCLKSIAA (215 aa). The rdRp Palm N-ter stretch occupies residues 4947 to 4985; it reads TRGVPVVIGTTKFYGGWDDMLRRLIKDVDNPVLMGWDYP. Residues 4977 to 5139 form the RdRp catalytic domain; it reads PVLMGWDYPK…CYNSDYASKG (163 aa). Residues 4986 to 5044 are rdRp Fingers C-ter; sequence KCDRAMPNILRIVSSLVLARKHEACCSQSDRFYRLANEYAQVLSEIVMCGGCYYVKPGG. The Zn(2+) site is built by H5007, C5010, and C5011. A rdRp Palm C-ter region spans residues 5045-5180; sequence TSSGDATTAF…NNGPHEFCSQ (136 aa). Residues S5124, D5125, and D5126 contribute to the active site. Positions 5181 to 5297 are rdRp Thumb; the sequence is HTMLVKMDGD…NMYLRSAVMQ (117 aa). Residues 5298 to 5410 enclose the CV ZBD domain; the sequence is SVGACVVCSS…DDFNRIASCK (113 aa). Zn(2+)-binding residues include C5302, C5305, C5313, C5316, C5323, C5326, H5330, H5336, C5347, C5352, C5369, and H5372. One can recognise a (+)RNA virus helicase ATP-binding domain in the interval 5553–5734; it reads SVLETFQNNV…MCCLGPDIFL (182 aa). Residue 5578-5585 coordinates ATP; it reads GPPGTGKS. The (+)RNA virus helicase C-terminal domain occupies 5735–5904; sequence GTCYRCPKEI…VETRVQCSTN (170 aa). The region spanning 5971–6186 is the ExoN domain; it reads LFITKEEAVK…RCLAVYDCFC (216 aa). Active-site residues include D5989, E5991, and E6090. 7 residues coordinate Zn(2+): C6106, C6109, C6125, H6128, H6156, C6160, and H6163. Active-site residues include H6167 and D6172. Residue C6178 participates in Zn(2+) binding. The N7-MTase domain maps to 6195-6421; that stretch reads YPIISNELSI…NLWNTFTKLQ (227 aa). An S-adenosyl-L-methionine-binding site is contributed by 6230–6236; that stretch reads DIGNPKA. Residues 6308–6322 form a gpppA-binding region; the sequence is CNGGSLYVNKHAFHT. The Zn(2+) site is built by C6346, C6367, C6378, and H6381. In terms of domain architecture, Nsp15 N-terminal oligomerization spans 6422-6482; it reads SLENVVYNLV…NVAVELFAKR (61 aa). In terms of domain architecture, AV-Nsp11N/CoV-Nsp15M spans 6483–6603; the sequence is SIRHHPELKL…FAVRKEGQDV (121 aa). In terms of domain architecture, NendoU spans 6653–6792; that stretch reads TCRTDMEKDF…NDEKVMTFYL (140 aa). Residues H6683, H6698, K6738, K6841, D6925, K6965, and E6998 contribute to the active site. A Nidovirus-type SAM-dependent 2'-O-MTase domain is found at 6797 to 7091; it reads ASDWKPGYSM…KEVFVGDSMV (295 aa).

The protein belongs to the coronaviruses polyprotein 1ab family. As to quaternary structure, interacts with host PHB and PHB2. Interacts with papain-like protease nsp3 and non-structural protein 6. In terms of assembly, monomer. Homodimer. Only the homodimer shows catalytic activity. As to quaternary structure, interacts with nsp8 and nsp12 to form the replication-transcription complex (RTC): nsp12, nsp7, two subunits of nsp8, and up to two subunits of nsp13. Interacts with nsp7, nsp13 and nsp12 to form the replication-transcription complex (RTC): nsp12, nsp7, two subunits of nsp8, and up to two subunits of nsp13. In terms of assembly, interacts with nsp12. As to quaternary structure, interacts with proofreading exoribonuclease nsp14 and 2'-O-methyltransferase nsp16; these interactions enhance nsp14 and nsp16 enzymatic activities. Interacts with nsp7 and nsp8 to form the replication-transcription complex (RTC): nsp12, nsp7, two subunits of nsp8, and up to two subunits of nsp13. Interacts with nsp9. In terms of assembly, interacts with nsp8 to form the replication-transcription complex (RTC): nsp12, nsp7, two subunits of nsp8, and up to two subunits of nsp13. The cofactor is Mn(2+). Mg(2+) serves as cofactor. Post-translationally, specific enzymatic cleavages in vivo by its own proteases yield mature proteins. 3CL-PRO and PL-PRO proteinases are autocatalytically processed.

The protein localises to the host membrane. It is found in the host cytoplasm. Its subcellular location is the host perinuclear region. It localises to the host endoplasmic reticulum-Golgi intermediate compartment. The catalysed reaction is RNA(n) + a ribonucleoside 5'-triphosphate = RNA(n+1) + diphosphate. The enzyme catalyses ATP + H2O = ADP + phosphate + H(+). It carries out the reaction Thiol-dependent hydrolysis of ester, thioester, amide, peptide and isopeptide bonds formed by the C-terminal Gly of ubiquitin (a 76-residue protein attached to proteins as an intracellular targeting signal).. It catalyses the reaction a 5'-end (N(7)-methyl 5'-triphosphoguanosine)-ribonucleoside in mRNA + S-adenosyl-L-methionine = a 5'-end (N(7)-methyl 5'-triphosphoguanosine)-(2'-O-methyl-ribonucleoside) in mRNA + S-adenosyl-L-homocysteine + H(+). The catalysed reaction is uridylyl-uridylyl-ribonucleotide-RNA = a 3'-end uridylyl-2',3'-cyclophospho-uridine-RNA + a 5'-end dephospho-ribonucleoside-RNA. The enzyme catalyses a 5'-end diphospho-ribonucleoside in mRNA + GTP + H(+) = a 5'-end (5'-triphosphoguanosine)-ribonucleoside in mRNA + diphosphate. It carries out the reaction a 5'-end (5'-triphosphoguanosine)-ribonucleoside in mRNA + S-adenosyl-L-methionine = a 5'-end (N(7)-methyl 5'-triphosphoguanosine)-ribonucleoside in mRNA + S-adenosyl-L-homocysteine. Its function is as follows. The replicase polyprotein of coronaviruses is a multifunctional protein: it contains the activities necessary for the transcription of negative stranded RNA, leader RNA, subgenomic mRNAs and progeny virion RNA as well as proteinases responsible for the cleavage of the polyprotein into functional products. In terms of biological role, inhibits host translation by interacting with the 40S ribosomal subunit. The nsp1-40S ribosome complex further induces an endonucleolytic cleavage near the 5'UTR of host mRNAs, targeting them for degradation. Viral mRNAs are not susceptible to nsp1-mediated endonucleolytic RNA cleavage thanks to the presence of a 5'-end leader sequence and are therefore protected from degradation. By suppressing host gene expression, nsp1 facilitates efficient viral gene expression in infected cells and evasion from host immune response. Functionally, may play a role in the modulation of host cell survival signaling pathway by interacting with host PHB and PHB2. Indeed, these two proteins play a role in maintaining the functional integrity of the mitochondria and protecting cells from various stresses. Responsible for the cleavages located at the N-terminus of the replicase polyprotein. In addition, PL-PRO possesses a deubiquitinating/deISGylating activity and processes both 'Lys-48'- and 'Lys-63'-linked polyubiquitin chains from cellular substrates. Participates together with nsp4 in the assembly of virally-induced cytoplasmic double-membrane vesicles necessary for viral replication. Antagonizes innate immune induction of type I interferon by blocking the phosphorylation, dimerization and subsequent nuclear translocation of host IRF3. Also prevents host NF-kappa-B signaling. Its function is as follows. Participates in the assembly of virally-induced cytoplasmic double-membrane vesicles necessary for viral replication. In terms of biological role, cleaves the C-terminus of replicase polyprotein at 11 sites. Recognizes substrates containing the core sequence [ILMVF]-Q-|-[SGACN]. Also able to bind an ADP-ribose-1''-phosphate (ADRP). Functionally, plays a role in the initial induction of autophagosomes from host endoplasmic reticulum. Later, limits the expansion of these phagosomes that are no longer able to deliver viral components to lysosomes. Forms a hexadecamer with nsp8 (8 subunits of each) that may participate in viral replication by acting as a primase. Alternatively, may synthesize substantially longer products than oligonucleotide primers. Its function is as follows. Forms a hexadecamer with nsp7 (8 subunits of each) that may participate in viral replication by acting as a primase. Alternatively, may synthesize substantially longer products than oligonucleotide primers. In terms of biological role, forms a primer, NSP9-pU, which is utilized by the polymerase for the initiation of RNA chains. Interacts with ribosome signal recognition particle RNA (SRP). Together with NSP8, suppress protein integration into the cell membrane, thereby disrupting host immune defenses. Functionally, plays a pivotal role in viral transcription by stimulating both nsp14 3'-5' exoribonuclease and nsp16 2'-O-methyltransferase activities. Therefore plays an essential role in viral mRNAs cap methylation. RNA-directed RNA polymerase that catalyzes the transcription of viral genomic and subgenomic RNAs. Acts in complex with nsp7 and nsp8 to transcribe both the minus and positive strands of genomic RNA. The kinase-like NiRAN domain of NSP12 attaches one or more nucleotides to the amino terminus of NSP9, forming a covalent RNA-protein intermediate that serves as transcription/replication primer. Subgenomic RNAs (sgRNAs) are formed by discontinuous transcription: The polymerase has the ability to pause at transcription-regulating sequences (TRS) and jump to the leader TRS, resulting in a major deletion. This creates a series of subgenomic RNAs that are replicated, transcribed and translated. In addition, Nsp12 is a subunit of the viral RNA capping enzyme that catalyzes the RNA guanylyltransferase reaction for genomic and sub-genomic RNAs. Subsequently, the NiRAN domain transfers RNA to GDP, and forms the core cap structure GpppA-RNA. Its function is as follows. Multi-functional protein with a zinc-binding domain in N-terminus displaying RNA and DNA duplex-unwinding activities with 5' to 3' polarity. Activity of helicase is dependent on magnesium. In terms of biological role, plays a role in viral RNA synthesis through two distinct activities. The N7-guanine methyltransferase activity plays a role in the formation of the cap structure GpppA-RNA. The proofreading exoribonuclease reduces the sensitivity of the virus to RNA mutagens during replication. This activity acts on both ssRNA and dsRNA in a 3'-5' direction. Functionally, plays a role in viral transcription/replication and prevents the simultaneous activation of host cell dsRNA sensors, such as MDA5/IFIH1, OAS, and PKR. Acts by degrading the 5'-polyuridines generated during replication of the poly(A) region of viral genomic and subgenomic RNAs. Catalyzes a two-step reaction in which a 2'3'-cyclic phosphate (2'3'-cP) is first generated by 2'-O transesterification, which is then hydrolyzed to a 3'-phosphate (3'-P). If not degraded, poly(U) RNA would hybridize with poly(A) RNA tails and activate host dsRNA sensors. Methyltransferase that mediates mRNA cap 2'-O-ribose methylation to the 5'-cap structure of viral mRNAs. N7-methyl guanosine cap is a prerequisite for binding of nsp16. Therefore plays an essential role in viral mRNAs cap methylation which is essential to evade immune system. The polypeptide is Replicase polyprotein 1ab (rep) (Bos taurus (Bovine)).